The sequence spans 464 residues: tRNA-2-methylthio-N(6)-dimethylallyladenosine synthase (464 aa).

One can recognise an MTTase N-terminal domain in the interval 19–135 (GSYWITTFGC…LENLLGKVDL (117 aa)). Residues cysteine 28, cysteine 64, cysteine 98, cysteine 170, cysteine 174, and cysteine 177 each coordinate [4Fe-4S] cluster. The region spanning 156 to 394 (RESSICGWVN…DLVEKTARSR (239 aa)) is the Radical SAM core domain. The TRAM domain occupies 396-464 (KRYINNIESV…PFSLTGELYL (69 aa)).

It belongs to the methylthiotransferase family. MiaB subfamily. As to quaternary structure, monomer. [4Fe-4S] cluster is required as a cofactor.

The protein localises to the cytoplasm. It carries out the reaction N(6)-dimethylallyladenosine(37) in tRNA + (sulfur carrier)-SH + AH2 + 2 S-adenosyl-L-methionine = 2-methylsulfanyl-N(6)-dimethylallyladenosine(37) in tRNA + (sulfur carrier)-H + 5'-deoxyadenosine + L-methionine + A + S-adenosyl-L-homocysteine + 2 H(+). Its function is as follows. Catalyzes the methylthiolation of N6-(dimethylallyl)adenosine (i(6)A), leading to the formation of 2-methylthio-N6-(dimethylallyl)adenosine (ms(2)i(6)A) at position 37 in tRNAs that read codons beginning with uridine. This is tRNA-2-methylthio-N(6)-dimethylallyladenosine synthase from Prochlorococcus marinus (strain AS9601).